The sequence spans 136 residues: MTVWEVHWRGEADGWQKNPTVAWLQGPEKEGAEKAFWAIWEVGDKLLNHRSAPGAPKKRGIGQLLIDWGLDVGEKLQVPVYLESTRAGLVFYTKLGFEKLSQGAVVKAEVTHVASDFELPVTVKMPSAARRMGFEG.

The protein operates within siderophore biosynthesis. Probable acyltransferase; part of the gene cluster that mediates the biosynthesis of hydroxamate-containing siderophores that play a critical role in virulence via intracellular iron acquisition during macrophage infection. The polypeptide is Probable acyltransferase SID5 (Ajellomyces capsulatus (Darling's disease fungus)).